The primary structure comprises 293 residues: Haloalkane dehalogenase (293 aa).

Residues 34–158 enclose the AB hydrolase-1 domain; the sequence is PVLFLHGNPT…FQAFRTADVG (125 aa). D106 functions as the Nucleophile in the catalytic mechanism. E130 serves as the catalytic Proton donor. H272 serves as the catalytic Proton acceptor.

Belongs to the haloalkane dehalogenase family. Type 2 subfamily. Monomer.

It catalyses the reaction 1-haloalkane + H2O = a halide anion + a primary alcohol + H(+). The protein operates within xenobiotic degradation; haloalkane degradation. It participates in xenobiotic degradation; 1,3-dichloropropene degradation. Functionally, catalyzes hydrolytic cleavage of carbon-halogen bonds in halogenated aliphatic compounds, leading to the formation of the corresponding primary alcohols, halide ions and protons. Has a broad substrate specificity, as it is able to dehalogenate mono- and di- chlorinated and brominated alkanes (up to at least C10), and the two isomers of 1,3-dichloropropene to 3-chloroallyl alcohol; the highest activity was found with 1,2-dibromoethane, while no activity was observed with the analog 1,2-dichloroethane. In Pseudomonas pavonaceae, this protein is Haloalkane dehalogenase (dhaA).